Consider the following 52-residue polypeptide: UPF0057 membrane protein YqaE (52 aa).

2 helical membrane-spanning segments follow: residues 1–21 and 23–43; these read MGFWRIVITIILPPLGVLLGK and FGWAFIINILLTLLGYIPGLI.

Belongs to the UPF0057 (PMP3) family.

Its subcellular location is the cell membrane. The polypeptide is UPF0057 membrane protein YqaE (yqaE) (Escherichia coli O157:H7).